A 123-amino-acid chain; its full sequence is NADH-quinone oxidoreductase subunit A (123 aa).

The next 3 membrane-spanning stretches (helical) occupy residues 11–31 (YLPI…IMIL), 68–88 (LVAI…PWAI), and 93–113 (IGKM…IGFI).

The protein belongs to the complex I subunit 3 family. NDH-1 is composed of 14 different subunits. Subunits NuoA, H, J, K, L, M, N constitute the membrane sector of the complex.

The protein resides in the cell inner membrane. It carries out the reaction a quinone + NADH + 5 H(+)(in) = a quinol + NAD(+) + 4 H(+)(out). Its function is as follows. NDH-1 shuttles electrons from NADH, via FMN and iron-sulfur (Fe-S) centers, to quinones in the respiratory chain. The immediate electron acceptor for the enzyme in this species is believed to be ubiquinone. Couples the redox reaction to proton translocation (for every two electrons transferred, four hydrogen ions are translocated across the cytoplasmic membrane), and thus conserves the redox energy in a proton gradient. The polypeptide is NADH-quinone oxidoreductase subunit A (Rickettsia prowazekii (strain Madrid E)).